The following is a 742-amino-acid chain: Phosphoribosylformylglycinamidine synthase subunit PurL (742 aa).

The active site involves His54. ATP contacts are provided by Tyr57 and Lys96. Glu98 lines the Mg(2+) pocket. Substrate contacts are provided by residues 99–102 and Arg121; that span reads SHNH. His100 (proton acceptor) is an active-site residue. Asp122 contacts Mg(2+). Gln245 is a binding site for substrate. Residue Asp273 coordinates Mg(2+). 317 to 319 serves as a coordination point for substrate; that stretch reads ESQ. The ATP site is built by Asp500 and Gly537. Asn538 is a Mg(2+) binding site. Ser540 lines the substrate pocket.

The protein belongs to the FGAMS family. As to quaternary structure, monomer. Part of the FGAM synthase complex composed of 1 PurL, 1 PurQ and 2 PurS subunits.

Its subcellular location is the cytoplasm. It catalyses the reaction N(2)-formyl-N(1)-(5-phospho-beta-D-ribosyl)glycinamide + L-glutamine + ATP + H2O = 2-formamido-N(1)-(5-O-phospho-beta-D-ribosyl)acetamidine + L-glutamate + ADP + phosphate + H(+). Its pathway is purine metabolism; IMP biosynthesis via de novo pathway; 5-amino-1-(5-phospho-D-ribosyl)imidazole from N(2)-formyl-N(1)-(5-phospho-D-ribosyl)glycinamide: step 1/2. Part of the phosphoribosylformylglycinamidine synthase complex involved in the purines biosynthetic pathway. Catalyzes the ATP-dependent conversion of formylglycinamide ribonucleotide (FGAR) and glutamine to yield formylglycinamidine ribonucleotide (FGAM) and glutamate. The FGAM synthase complex is composed of three subunits. PurQ produces an ammonia molecule by converting glutamine to glutamate. PurL transfers the ammonia molecule to FGAR to form FGAM in an ATP-dependent manner. PurS interacts with PurQ and PurL and is thought to assist in the transfer of the ammonia molecule from PurQ to PurL. The polypeptide is Phosphoribosylformylglycinamidine synthase subunit PurL (Bacillus velezensis (strain DSM 23117 / BGSC 10A6 / LMG 26770 / FZB42) (Bacillus amyloliquefaciens subsp. plantarum)).